A 312-amino-acid chain; its full sequence is Glyoxylate/hydroxypyruvate reductase A (312 aa).

The active site involves Arg-227. Catalysis depends on His-275, which acts as the Proton donor.

It belongs to the D-isomer specific 2-hydroxyacid dehydrogenase family. GhrA subfamily.

The protein localises to the cytoplasm. The catalysed reaction is glycolate + NADP(+) = glyoxylate + NADPH + H(+). It catalyses the reaction (R)-glycerate + NAD(+) = 3-hydroxypyruvate + NADH + H(+). It carries out the reaction (R)-glycerate + NADP(+) = 3-hydroxypyruvate + NADPH + H(+). Catalyzes the NADPH-dependent reduction of glyoxylate and hydroxypyruvate into glycolate and glycerate, respectively. This Salmonella choleraesuis (strain SC-B67) protein is Glyoxylate/hydroxypyruvate reductase A.